An 83-amino-acid polypeptide reads, in one-letter code: UPF0298 protein SERP0712 (83 aa).

This sequence belongs to the UPF0298 family.

The protein localises to the cytoplasm. This chain is UPF0298 protein SERP0712, found in Staphylococcus epidermidis (strain ATCC 35984 / DSM 28319 / BCRC 17069 / CCUG 31568 / BM 3577 / RP62A).